The following is a 492-amino-acid chain: MTVHFPFDNSYAALPENFFARVAPTPVAAPRLIKLNRPLAQRLGLDPDRLDSPEGAEILAGTRVPEGAASIAMAYAGHQFGNFVPQLGDGRAILLGEVIDRDGVRRDIQLKGSGRTPFSRMGDGRAALGPVLREYIVSEAMAALGVPTTRSLAAVLTGERVLRDPIQPGAVLTRIASSHIRVGTFQFFASRGDRDAVRALADHVIARHYPEAAEADSPYLALLEGVIARQADLIARWMMIGFIHGVMNTDNTSIAGETIDYGPCAYMDTFDPKTVFSSIDHMGRYAFGNQPPIALWNLTRLAECLVPLLSDDDDKGVEIAQRALGGFADRFNAAYLAGLAAKLGLATTQPEDTQLAQDFLAAMAKGRADFTLAFRRLSDAAIDPVDLGAVRALFDDPTAFDEWAPRWRSRISLEEQNNTARQTEMREVNPIYIPRNHRVEAVIRAAVDHDDFAPFEEILAVLSNPFREQAKFARYAEPPQLHERVLETFCGT.

Residues glycine 88, glycine 90, arginine 91, lysine 111, aspartate 123, glycine 124, arginine 174, and arginine 181 each contribute to the ATP site. Aspartate 250 functions as the Proton acceptor in the catalytic mechanism. Residues asparagine 251 and aspartate 260 each contribute to the Mg(2+) site. Aspartate 260 is a binding site for ATP.

This sequence belongs to the SELO family. It depends on Mg(2+) as a cofactor. Mn(2+) is required as a cofactor.

It catalyses the reaction L-seryl-[protein] + ATP = 3-O-(5'-adenylyl)-L-seryl-[protein] + diphosphate. The enzyme catalyses L-threonyl-[protein] + ATP = 3-O-(5'-adenylyl)-L-threonyl-[protein] + diphosphate. The catalysed reaction is L-tyrosyl-[protein] + ATP = O-(5'-adenylyl)-L-tyrosyl-[protein] + diphosphate. It carries out the reaction L-histidyl-[protein] + UTP = N(tele)-(5'-uridylyl)-L-histidyl-[protein] + diphosphate. It catalyses the reaction L-seryl-[protein] + UTP = O-(5'-uridylyl)-L-seryl-[protein] + diphosphate. The enzyme catalyses L-tyrosyl-[protein] + UTP = O-(5'-uridylyl)-L-tyrosyl-[protein] + diphosphate. Nucleotidyltransferase involved in the post-translational modification of proteins. It can catalyze the addition of adenosine monophosphate (AMP) or uridine monophosphate (UMP) to a protein, resulting in modifications known as AMPylation and UMPylation. In Rhodopseudomonas palustris (strain HaA2), this protein is Protein nucleotidyltransferase YdiU.